A 289-amino-acid chain; its full sequence is uncharacterized protein (289 aa).

Residues 268–289 (SDDGYETQWSDGPYSIPSGLSD) form a disordered region.

This is an uncharacterized protein from Zea mays (Maize).